Consider the following 611-residue polypeptide: DNA mismatch repair protein MutL (611 aa).

Belongs to the DNA mismatch repair MutL/HexB family.

Its function is as follows. This protein is involved in the repair of mismatches in DNA. It is required for dam-dependent methyl-directed DNA mismatch repair. May act as a 'molecular matchmaker', a protein that promotes the formation of a stable complex between two or more DNA-binding proteins in an ATP-dependent manner without itself being part of a final effector complex. The protein is DNA mismatch repair protein MutL of Borreliella afzelii (strain PKo) (Borrelia afzelii).